Here is a 245-residue protein sequence, read N- to C-terminus: tRNA (guanine-N(1)-)-methyltransferase (245 aa).

Residues G111 and I131–L136 contribute to the S-adenosyl-L-methionine site.

The protein belongs to the RNA methyltransferase TrmD family. In terms of assembly, homodimer.

It is found in the cytoplasm. It catalyses the reaction guanosine(37) in tRNA + S-adenosyl-L-methionine = N(1)-methylguanosine(37) in tRNA + S-adenosyl-L-homocysteine + H(+). Its function is as follows. Specifically methylates guanosine-37 in various tRNAs. In Staphylococcus carnosus (strain TM300), this protein is tRNA (guanine-N(1)-)-methyltransferase.